A 156-amino-acid chain; its full sequence is Small ribosomal subunit protein uS7 (156 aa).

This sequence belongs to the universal ribosomal protein uS7 family. As to quaternary structure, part of the 30S ribosomal subunit. Contacts proteins S9 and S11.

In terms of biological role, one of the primary rRNA binding proteins, it binds directly to 16S rRNA where it nucleates assembly of the head domain of the 30S subunit. Is located at the subunit interface close to the decoding center, probably blocks exit of the E-site tRNA. This chain is Small ribosomal subunit protein uS7, found in Cutibacterium acnes (strain DSM 16379 / KPA171202) (Propionibacterium acnes).